Reading from the N-terminus, the 245-residue chain is Adenylate kinase (245 aa).

Gly-15 to Thr-20 provides a ligand contact to ATP. The interval Ser-35–Leu-64 is NMP. Residues Ser-36, Arg-41, Lys-62–Leu-64, Gly-103–Arg-106, and Gln-110 contribute to the AMP site. The segment at Ser-143–Asp-176 is LID. Arg-144 serves as a coordination point for ATP. Residues Cys-147 and Cys-150 each coordinate Zn(2+). Residue Ile-153 to Tyr-154 coordinates ATP. Positions 163 and 166 each coordinate Zn(2+). Residues Arg-173 and Arg-184 each coordinate AMP. Ala-212 is an ATP binding site.

It belongs to the adenylate kinase family. As to quaternary structure, monomer.

The protein localises to the cytoplasm. The catalysed reaction is AMP + ATP = 2 ADP. It functions in the pathway purine metabolism; AMP biosynthesis via salvage pathway; AMP from ADP: step 1/1. Catalyzes the reversible transfer of the terminal phosphate group between ATP and AMP. Plays an important role in cellular energy homeostasis and in adenine nucleotide metabolism. This chain is Adenylate kinase, found in Chlamydia trachomatis serovar A (strain ATCC VR-571B / DSM 19440 / HAR-13).